The following is a 380-amino-acid chain: Cytochrome b (380 aa).

4 helical membrane-spanning segments follow: residues 34 to 54 (FGSLLGICLTTQILTGLLLAM), 78 to 99 (WLIRNIHANGASFFFICIYLHI), 114 to 134 (WNTGILLLLTLMATAFVGYVL), and 179 to 199 (FFALHFLLPFMIAGLTLIHLT). Heme b is bound by residues H84 and H98. Heme b-binding residues include H183 and H197. H202 contributes to the a ubiquinone binding site. Helical transmembrane passes span 227 to 247 (LKDTLGFMLMLLPLTTLALFS), 289 to 309 (LGGVLALAASVLILFLSPLLH), 321 to 341 (LSQLLFWILIANLFILTWVGS), and 348 to 368 (FIIIGQLASLTYFTILLILLP).

It belongs to the cytochrome b family. The cytochrome bc1 complex contains 11 subunits: 3 respiratory subunits (MT-CYB, CYC1 and UQCRFS1), 2 core proteins (UQCRC1 and UQCRC2) and 6 low-molecular weight proteins (UQCRH/QCR6, UQCRB/QCR7, UQCRQ/QCR8, UQCR10/QCR9, UQCR11/QCR10 and a cleavage product of UQCRFS1). This cytochrome bc1 complex then forms a dimer. Requires heme b as cofactor.

It localises to the mitochondrion inner membrane. Component of the ubiquinol-cytochrome c reductase complex (complex III or cytochrome b-c1 complex) that is part of the mitochondrial respiratory chain. The b-c1 complex mediates electron transfer from ubiquinol to cytochrome c. Contributes to the generation of a proton gradient across the mitochondrial membrane that is then used for ATP synthesis. This chain is Cytochrome b (MT-CYB), found in Fregetta tropica (Black-bellied storm-petrel).